We begin with the raw amino-acid sequence, 111 residues long: MIQDPSLIICHDVDGAPVRIGAKVKVVPHSEDGTISQRFLGQTGIVVGLVFDDPATQYPDDPLIQVLVEGLGEDLFFPEELELAPEWARNRIAQHRQAVRTGGRSSLERLP.

In terms of assembly, monomer. Interacts with CarA and CarH.

Functionally, involved in carotenoid biosynthesis. Antagonizes the transcriptional repressor proteins CarA and CarH by preventing their binding to DNA. Can also dissociate preformed CarA-DNA complexes. Does not bind DNA. The protein is Antirepressor protein CarS (carS) of Myxococcus xanthus.